Reading from the N-terminus, the 96-residue chain is Co-chaperonin GroES (96 aa).

The protein belongs to the GroES chaperonin family. In terms of assembly, heptamer of 7 subunits arranged in a ring. Interacts with the chaperonin GroEL.

The protein resides in the cytoplasm. Its function is as follows. Together with the chaperonin GroEL, plays an essential role in assisting protein folding. The GroEL-GroES system forms a nano-cage that allows encapsulation of the non-native substrate proteins and provides a physical environment optimized to promote and accelerate protein folding. GroES binds to the apical surface of the GroEL ring, thereby capping the opening of the GroEL channel. This chain is Co-chaperonin GroES, found in Aggregatibacter actinomycetemcomitans (Actinobacillus actinomycetemcomitans).